Consider the following 411-residue polypeptide: Argininosuccinate synthase (411 aa).

ATP is bound by residues 10–18 and alanine 37; that span reads AYSGGLDTS. Tyrosine 89 and serine 94 together coordinate L-citrulline. Position 119 (glycine 119) interacts with ATP. L-aspartate contacts are provided by threonine 121, asparagine 125, and aspartate 126. Asparagine 125 contributes to the L-citrulline binding site. The L-citrulline site is built by arginine 129, serine 178, serine 187, glutamate 263, and tyrosine 275.

The protein belongs to the argininosuccinate synthase family. Type 1 subfamily. In terms of assembly, homotetramer.

The protein resides in the cytoplasm. The catalysed reaction is L-citrulline + L-aspartate + ATP = 2-(N(omega)-L-arginino)succinate + AMP + diphosphate + H(+). It functions in the pathway amino-acid biosynthesis; L-arginine biosynthesis; L-arginine from L-ornithine and carbamoyl phosphate: step 2/3. This is Argininosuccinate synthase from Aeromonas salmonicida (strain A449).